Here is a 733-residue protein sequence, read N- to C-terminus: Sulfate transporter (733 aa).

Residues 1 to 18 (MSLKNEEQNDLSPKDSVK) show a composition bias toward basic and acidic residues. Positions 1-37 (MSLKNEEQNDLSPKDSVKGNDQYRAPSGIHLEREEES) are disordered. Ser-12 and Ser-16 each carry phosphoserine. Helical transmembrane passes span 113-133 (VMSG…YSLL) and 138-158 (PIYG…LGTS). Asn-194 is a glycosylation site (N-linked (GlcNAc...) asparagine). 6 consecutive transmembrane segments (helical) span residues 214-234 (IIVG…MGFF), 237-257 (GFVS…GASF), 379-399 (IDAI…SEMF), 415-435 (AIGF…SAAL), 453-473 (VMTA…FFSL), and 519-539 (LIST…CVIL). The 152-residue stretch at 563-714 (AYKNLQAKSG…SVYEAMTFAE (152 aa)) folds into the STAS domain.

Belongs to the SLC26A/SulP transporter (TC 2.A.53) family. Post-translationally, N-glycosylated.

It is found in the cell membrane. Its subcellular location is the apical cell membrane. The enzyme catalyses oxalate(in) + sulfate(out) = oxalate(out) + sulfate(in). The catalysed reaction is sulfate(out) + 2 chloride(in) = sulfate(in) + 2 chloride(out). It catalyses the reaction oxalate(out) + 2 chloride(in) = oxalate(in) + 2 chloride(out). It carries out the reaction bromide(in) + chloride(out) = bromide(out) + chloride(in). The enzyme catalyses nitrate(in) + chloride(out) = nitrate(out) + chloride(in). The catalysed reaction is iodide(in) + chloride(out) = iodide(out) + chloride(in). Its function is as follows. Sulfate transporter which mediates sulfate uptake into chondrocytes in order to maintain adequate sulfation of proteoglycans which is needed for cartilage development. Mediates electroneutral anion exchange of sulfate ions for oxalate ions, sulfate and oxalate ions for chloride and/or hydroxyl ions and chloride ions for bromide, iodide and nitrate ions. The coupling of sulfate transport to both hydroxyl and chloride ions likely serves to ensure transport at both acidic pH when most sulfate uptake is mediated by sulfate-hydroxide exchange and alkaline pH when most sulfate uptake is mediated by sulfate-chloride exchange. Essential for chondrocyte proliferation, differentiation and cell size expansion. The chain is Sulfate transporter (SLC26A2) from Bubalus bubalis (Domestic water buffalo).